The following is a 76-amino-acid chain: Conotoxin Cal5a L2 (76 aa).

Residues 1–22 (MRFYIGLMAALMLTSILRTDSA) form the signal peptide. Positions 23–42 (SVGQTGTKSELALIERVIRQ) are excised as a propeptide. 4-hydroxyproline is present on Pro-50. 3 positions are modified to 4-hydroxyproline; partial: Pro-58, Pro-62, and Pro-64.

It belongs to the conotoxin T superfamily. In terms of processing, contains 2 disulfide bonds that can be either 'C1-C3, C2-C4' or 'C1-C4, C2-C3', since these disulfide connectivities have been observed for conotoxins with cysteine framework V (for examples, see AC P0DQQ7 and AC P81755). As to expression, expressed by the venom duct.

Its subcellular location is the secreted. Functionally, probable neurotoxin with unknown target. Possibly targets ion channels. The polypeptide is Conotoxin Cal5a L2 (Californiconus californicus (California cone)).